Consider the following 545-residue polypeptide: High-molecular-weight cytochrome c (545 aa).

An N-terminal signal peptide occupies residues methionine 1–threonine 31. Heme c is bound by residues histidine 66, histidine 69, cysteine 80, cysteine 83, histidine 84, histidine 111, cysteine 114, cysteine 117, histidine 118, cysteine 135, cysteine 138, histidine 139, histidine 159, histidine 162, cysteine 178, cysteine 181, histidine 182, histidine 183, cysteine 202, cysteine 205, histidine 206, histidine 222, cysteine 225, cysteine 228, histidine 229, cysteine 244, cysteine 247, histidine 248, histidine 298, histidine 301, cysteine 308, cysteine 311, histidine 312, histidine 313, cysteine 319, cysteine 322, histidine 323, histidine 341, cysteine 349, cysteine 352, histidine 353, cysteine 362, cysteine 365, histidine 366, cysteine 378, cysteine 381, histidine 382, histidine 449, histidine 470, cysteine 477, cysteine 480, histidine 481, histidine 482, cysteine 493, cysteine 496, histidine 497, histidine 516, cysteine 519, cysteine 522, histidine 523, cysteine 536, cysteine 539, and histidine 540.

In terms of assembly, monomer. Post-translationally, binds 16 heme c groups per subunit. High-spin heme 15 has single axial histidine ligand and the other hemes are low-spin bis-histidinyl coordinated.

The protein localises to the periplasm. Functionally, HMWC (high-molecular-weight cytochrome c), ORF2, ORF3, ORF4, ORF5 and ORF6 in the HMC operon form a transmembrane protein complex that allows electron flow from the periplasmic hydrogenase to the cytoplasmic enzymes that catalyze reduction of sulfates. This is High-molecular-weight cytochrome c (hmcA) from Nitratidesulfovibrio vulgaris (strain ATCC 29579 / DSM 644 / CCUG 34227 / NCIMB 8303 / VKM B-1760 / Hildenborough) (Desulfovibrio vulgaris).